The primary structure comprises 137 residues: Large ribosomal subunit protein bL17 (137 aa).

This sequence belongs to the bacterial ribosomal protein bL17 family. In terms of assembly, part of the 50S ribosomal subunit. Contacts protein L32.

The chain is Large ribosomal subunit protein bL17 from Rickettsia typhi (strain ATCC VR-144 / Wilmington).